Here is a 200-residue protein sequence, read N- to C-terminus: Dephospho-CoA kinase (200 aa).

The DPCK domain occupies Val4–Asp200. Ala12–Thr17 serves as a coordination point for ATP.

This sequence belongs to the CoaE family.

It localises to the cytoplasm. The enzyme catalyses 3'-dephospho-CoA + ATP = ADP + CoA + H(+). It functions in the pathway cofactor biosynthesis; coenzyme A biosynthesis; CoA from (R)-pantothenate: step 5/5. Functionally, catalyzes the phosphorylation of the 3'-hydroxyl group of dephosphocoenzyme A to form coenzyme A. The polypeptide is Dephospho-CoA kinase (Bacillus cereus (strain ATCC 14579 / DSM 31 / CCUG 7414 / JCM 2152 / NBRC 15305 / NCIMB 9373 / NCTC 2599 / NRRL B-3711)).